We begin with the raw amino-acid sequence, 384 residues long: GTPase Obg (384 aa).

Residues 1–159 form the Obg domain; it reads MKFIDEAKIE…RSLQLELKVL (159 aa). The disordered stretch occupies residues 20–46; it reads ATSFRREKFVPRGGPDGGDGGKGGSVW. Over residues 33–43 the composition is skewed to gly residues; sequence GPDGGDGGKGG. One can recognise an OBG-type G domain in the interval 160–348; the sequence is ADVGLLGMPN…LVHQINQYLT (189 aa). GTP contacts are provided by residues 166–173, 191–195, 213–216, 284–287, and 329–331; these read GMPNAGKS, FTTLH, DIPG, NKLD, and SAL. 2 residues coordinate Mg(2+): Ser-173 and Thr-193.

It belongs to the TRAFAC class OBG-HflX-like GTPase superfamily. OBG GTPase family. Monomer. It depends on Mg(2+) as a cofactor.

Its subcellular location is the cytoplasm. Functionally, an essential GTPase which binds GTP, GDP and possibly (p)ppGpp with moderate affinity, with high nucleotide exchange rates and a fairly low GTP hydrolysis rate. Plays a role in control of the cell cycle, stress response, ribosome biogenesis and in those bacteria that undergo differentiation, in morphogenesis control. The chain is GTPase Obg from Neisseria meningitidis serogroup C / serotype 2a (strain ATCC 700532 / DSM 15464 / FAM18).